Reading from the N-terminus, the 304-residue chain is Agmatinase (304 aa).

Mn(2+)-binding residues include histidine 126, aspartate 149, histidine 151, aspartate 153, aspartate 230, and aspartate 232.

This sequence belongs to the arginase family. Agmatinase subfamily. Mn(2+) is required as a cofactor.

The enzyme catalyses agmatine + H2O = urea + putrescine. Its pathway is amine and polyamine biosynthesis; putrescine biosynthesis via agmatine pathway; putrescine from agmatine: step 1/1. In terms of biological role, catalyzes the formation of putrescine from agmatine. The polypeptide is Agmatinase (Edwardsiella ictaluri (strain 93-146)).